Reading from the N-terminus, the 292-residue chain is Golgi to ER traffic protein 2 (292 aa).

Residues 1-18 are compositionally biased toward basic and acidic residues; that stretch reads MSELSAEEKRKLLRERRQ. The interval 1–80 is disordered; sequence MSELSAEEKR…TPLHDDPEVP (80 aa). Topologically, residues 1 to 158 are cytoplasmic; that stretch reads MSELSAEEKR…SQYHAYEQKQ (158 aa). Composition is skewed to polar residues over residues 29–47 and 55–71; these read RLNNILSQGSSVKSSNVTS and ATTTVMDLPSRETQSPT. The helical transmembrane segment at 159–179 threads the bilayer; it reads WKARFLVVRWIIHTLNFVYHY. At 180–205 the chain is on the lumenal side; that stretch reads IASGYKLSASPYAFVRAQAVDSHVRT. The helical transmembrane segment at 206-225 threads the bilayer; sequence FFTAFLTVEVAVISAYFLVM. Topologically, residues 226–268 are cytoplasmic; it reads SQPKFKDFSRENLVSRILSMASAVVPAVGRYQPLVTRALVYWN. Residues 269–289 traverse the membrane as a helical segment; sequence GASIFVGDLMLMVFYFGITSV. The Lumenal portion of the chain corresponds to 290–292; the sequence is LGN.

The protein belongs to the GET2 family. In terms of assembly, component of the Golgi to ER traffic (GET) complex, which is composed of GET1, GET2 and GET3. Within the complex, GET1 and GET2 form a heterotetramer which is stabilized by phosphatidylinositol binding and which binds to the GET3 homodimer.

It localises to the endoplasmic reticulum membrane. The protein localises to the golgi apparatus membrane. Its function is as follows. Required for the post-translational delivery of tail-anchored (TA) proteins to the endoplasmic reticulum. Together with GET1, acts as a membrane receptor for soluble GET3, which recognizes and selectively binds the transmembrane domain of TA proteins in the cytosol. The GET complex cooperates with the HDEL receptor ERD2 to mediate the ATP-dependent retrieval of resident ER proteins that contain a C-terminal H-D-E-L retention signal from the Golgi to the ER. The chain is Golgi to ER traffic protein 2 from Clavispora lusitaniae (strain ATCC 42720) (Yeast).